Reading from the N-terminus, the 464-residue chain is Asparagine--tRNA ligase (464 aa).

It belongs to the class-II aminoacyl-tRNA synthetase family. Homodimer.

Its subcellular location is the cytoplasm. It catalyses the reaction tRNA(Asn) + L-asparagine + ATP = L-asparaginyl-tRNA(Asn) + AMP + diphosphate + H(+). This chain is Asparagine--tRNA ligase, found in Clostridium botulinum (strain Eklund 17B / Type B).